Consider the following 511-residue polypeptide: MDEDNLETALQTYRAQLQQVELALGAGLDASEQADLRQLQGDLKELIELTEASLLSVRKSKLLSTVDQESPAQEDAEYLAFQKAIAEEVEAPGAPCNDSETAPGSEVQPGSTSSALEEEEEDPDLEELSGAKVNAPYYSAWGTLEYHNAMVVGAEEAEDGSACVRVLYLYPTHKSLKPCPFFLEGKCRFKENCRFSHGQVVSVDELRPFQDPDLSLLQTGSACLAKHQDGLWHPARITDVDNGYYTVKFDSLLLKEAVVEGDSILPPLRTEATESSDSDTGDASDSSYARVVEPSTVDTGTCSSAFAGWEVHTRGIGSKLLVKMGYEFGKGLGRHAEGRVEPIHAVVLPRGKSLDQCAEILQKKTKRGQAGSNRPPKCRRSGSRPEGRPPPRNVFDFLNEKLQSQVPGTPDAGVDTPERRNKDMYHASKSAKQALSLQLFQTEEKIERTQRDIRGIQEALTRNTGRHNMTTAHLQEKLEGAQRQLGQLRAQEADLQRKQRKADTHRKMTEF.

Position 1 is an N-acetylmethionine (Met1). The residue at position 70 (Ser70) is a Phosphoserine. Positions 92–129 are disordered; the sequence is PGAPCNDSETAPGSEVQPGSTSSALEEEEEDPDLEELS. The span at 98-115 shows a compositional bias: polar residues; that stretch reads DSETAPGSEVQPGSTSSA. Residues 116–127 are compositionally biased toward acidic residues; it reads LEEEEEDPDLEE. The C3H1-type zinc finger occupies 174–200; sequence KSLKPCPFFLEGKCRFKENCRFSHGQV. A disordered region spans residues 266–291; sequence PPLRTEATESSDSDTGDASDSSYARV. Ser276 is subject to Phosphoserine. At Thr280 the chain carries Phosphothreonine. The region spanning 313-359 is the G-patch domain; the sequence is TRGIGSKLLVKMGYEFGKGLGRHAEGRVEPIHAVVLPRGKSLDQCAE. Ser353 carries the phosphoserine modification. Disordered stretches follow at residues 363–393 and 490–511; these read KKTK…PPRN and AQEA…MTEF. The segment covering 491-511 has biased composition (basic and acidic residues); that stretch reads QEADLQRKQRKADTHRKMTEF.

Interacts with CHD4/Mi-2; the interaction is direct.

It is found in the nucleus. Its function is as follows. Transcription repressor that specifically binds the 5'-GGAG[GA]A[GA]A-3' consensus sequence. Represses transcription by recruiting the chromatin multiprotein complex NuRD to target promoters. Negatively regulates expression of EGFR, a gene involved in cell proliferation, survival and migration. Its ability to repress genes of the EGFR pathway suggest it may act as a tumor suppressor. This Mus musculus (Mouse) protein is Zinc finger CCCH-type with G patch domain-containing protein (Zgpat).